The primary structure comprises 487 residues: ATP-dependent 6-phosphofructokinase (487 aa).

ATP is bound by residues Gly107, Arg173–Gly174, Gly198–Thr201, and Lys226. Residue Asp199 coordinates Mg(2+). Substrate is bound by residues Thr227–Asp229, Met272–Arg274, and Glu325. Asp229 acts as the Proton acceptor in catalysis. Ser341 to Asn343 contacts ATP. Residue Tyr380–Arg383 participates in substrate binding. The Peroxisomal targeting signal motif lies at Ala485–Leu487.

The protein belongs to the phosphofructokinase type A (PFKA) family. PPi-dependent PFK group II subfamily. Atypical ATP-dependent clade 'X' sub-subfamily. Homotetramer. Requires Mg(2+) as cofactor.

The protein localises to the glycosome. The catalysed reaction is beta-D-fructose 6-phosphate + ATP = beta-D-fructose 1,6-bisphosphate + ADP + H(+). The protein operates within carbohydrate degradation; glycolysis; D-glyceraldehyde 3-phosphate and glycerone phosphate from D-glucose: step 3/4. Its activity is regulated as follows. Allosterically activated by AMP. In terms of biological role, catalyzes the phosphorylation of D-fructose 6-phosphate to fructose 1,6-bisphosphate by ATP, the first committing step of glycolysis. In Trypanosoma brucei brucei, this protein is ATP-dependent 6-phosphofructokinase.